Reading from the N-terminus, the 186-residue chain is MAETSSLISGVAQRYAGSLFELALDANSVASVEKDLGRFEALLSGSKDLRRLISSPVFSSEDQLHAIGAIADKAGIKGLVGNFLRVVAQNRRLFALPGIIAAFRQIAAEHRGEISADVVSAHELTSAQQNELKATLKGVAGKDVTINVTVDPSILGGLIVKMGSRQIDTSLRTKLSSLKLALKEVG.

Belongs to the ATPase delta chain family. As to quaternary structure, F-type ATPases have 2 components, F(1) - the catalytic core - and F(0) - the membrane proton channel. F(1) has five subunits: alpha(3), beta(3), gamma(1), delta(1), epsilon(1). F(0) has three main subunits: a(1), b(2) and c(10-14). The alpha and beta chains form an alternating ring which encloses part of the gamma chain. F(1) is attached to F(0) by a central stalk formed by the gamma and epsilon chains, while a peripheral stalk is formed by the delta and b chains.

The protein localises to the cell inner membrane. Functionally, f(1)F(0) ATP synthase produces ATP from ADP in the presence of a proton or sodium gradient. F-type ATPases consist of two structural domains, F(1) containing the extramembraneous catalytic core and F(0) containing the membrane proton channel, linked together by a central stalk and a peripheral stalk. During catalysis, ATP synthesis in the catalytic domain of F(1) is coupled via a rotary mechanism of the central stalk subunits to proton translocation. In terms of biological role, this protein is part of the stalk that links CF(0) to CF(1). It either transmits conformational changes from CF(0) to CF(1) or is implicated in proton conduction. This is ATP synthase subunit delta from Brucella suis biovar 1 (strain 1330).